Here is a 127-residue protein sequence, read N- to C-terminus: Apolipoprotein C-IV (127 aa).

The N-terminal stretch at M1–C27 is a signal peptide.

Belongs to the apolipoprotein C4 family.

The protein localises to the secreted. In terms of biological role, may participate in lipoprotein metabolism. The chain is Apolipoprotein C-IV (APOC4) from Papio anubis (Olive baboon).